The chain runs to 183 residues: Beta-defensin 129 (183 aa).

The first 19 residues, 1-19 (MKLLFPIFASLMLQYQVNT), serve as a signal peptide directing secretion. Disulfide bonds link Cys27–Cys53, Cys34–Cys48, and Cys38–Cys54. The segment at 141–183 (TATSTKSNTKESRDSATASSPPAPPPPNILPTPSLELEEAEEQ) is disordered. Pro residues predominate over residues 161–170 (PPAPPPPNIL).

Belongs to the beta-defensin family.

It is found in the secreted. Its function is as follows. Has antibacterial activity. This is Beta-defensin 129 (DEFB129) from Gorilla gorilla gorilla (Western lowland gorilla).